We begin with the raw amino-acid sequence, 230 residues long: Acyl-protein thioesterase 1 (230 aa).

Residues Ser119, Asp174, and His208 each act as charge relay system in the active site. The residue at position 224 (Lys224) is an N6-acetyllysine.

The protein belongs to the AB hydrolase superfamily. AB hydrolase 2 family. In terms of assembly, homodimer. In terms of tissue distribution, ubiquitous. Detected at low levels in all tissues tested.

It is found in the cytoplasm. The protein localises to the cell membrane. Its subcellular location is the nucleus membrane. It localises to the endoplasmic reticulum. The catalysed reaction is S-hexadecanoyl-L-cysteinyl-[protein] + H2O = L-cysteinyl-[protein] + hexadecanoate + H(+). It catalyses the reaction 1-hexadecanoyl-sn-glycero-3-phosphocholine + H2O = sn-glycerol 3-phosphocholine + hexadecanoate + H(+). It carries out the reaction a 1-(9Z-octadecenoyl)-2-acyl-sn-glycero-3-phosphocholine + H2O = a 2-acyl-sn-glycero-3-phosphocholine + (9Z)-octadecenoate + H(+). In terms of biological role, acts as an acyl-protein thioesterase. Hydrolyzes fatty acids from S-acylated cysteine residues in proteins such as trimeric G alpha proteins or HRAS. Acts as a palmitoyl thioesterase that catalyzes depalmitoylation of proteins, such as ADRB2, KCNMA1 and SQSTM1. Acts as a negative regulator of autophagy by mediating palmitoylation of SQSTM1, decreasing affinity between SQSTM1 and ATG8 proteins and recruitment of ubiquitinated cargo proteins to autophagosomes. Acts as a lysophospholipase and hydrolyzes lysophosphatidylcholine (lyso-PC). Also hydrolyzes lysophosphatidylethanolamine (lyso-PE), lysophosphatidylinositol (lyso-PI) and lysophosphatidylserine (lyso-PS). Has much higher thioesterase activity than lysophospholipase activity. Contributes to the production of lysophosphatidic acid (LPA) during blood coagulation by recognizing and cleaving plasma phospholipids to generate lysophospholipids which in turn act as substrates for ENPP2 to produce LPA. The sequence is that of Acyl-protein thioesterase 1 (Lypla1) from Rattus norvegicus (Rat).